Consider the following 226-residue polypeptide: V-type proton ATPase subunit E 1 (226 aa).

N-acetylalanine is present on Ala2. A Phosphotyrosine modification is found at Tyr56.

It belongs to the V-ATPase E subunit family. As to quaternary structure, V-ATPase is a heteromultimeric enzyme made up of two complexes: the ATP-hydrolytic V1 complex and the proton translocation V0 complex. The V1 complex consists of three catalytic AB heterodimers that form a heterohexamer, three peripheral stalks each consisting of EG heterodimers, one central rotor including subunits D and F, and the regulatory subunits C and H. The proton translocation complex V0 consists of the proton transport subunit a, a ring of proteolipid subunits c9c'', rotary subunit d, subunits e and f, and the accessory subunits ATP6AP1/Ac45 and ATP6AP2/PRR. Interacts with RABL2/RABL2A; binds preferentially to GTP-bound RABL2. Interacts with ALDOC. Interacts with RAB11B. Expressed within the midpiece of sperm tail (at protein level). Kidney; localizes to early distal nephron, encompassing thick ascending limbs and distal convoluted tubules (at protein level).

The protein localises to the apical cell membrane. It localises to the cytoplasmic vesicle. The protein resides in the secretory vesicle. It is found in the synaptic vesicle membrane. Its subcellular location is the clathrin-coated vesicle membrane. Subunit of the V1 complex of vacuolar(H+)-ATPase (V-ATPase), a multisubunit enzyme composed of a peripheral complex (V1) that hydrolyzes ATP and a membrane integral complex (V0) that translocates protons. V-ATPase is responsible for acidifying and maintaining the pH of intracellular compartments and in some cell types, is targeted to the plasma membrane, where it is responsible for acidifying the extracellular environment. The chain is V-type proton ATPase subunit E 1 (Atp6v1e1) from Mus musculus (Mouse).